The following is a 199-amino-acid chain: Molybdenum cofactor guanylyltransferase (199 aa).

Residues 12–14 (LAG), lysine 25, asparagine 53, aspartate 71, and aspartate 101 each bind GTP. Residue aspartate 101 coordinates Mg(2+).

This sequence belongs to the MobA family. As to quaternary structure, monomer. Mg(2+) is required as a cofactor.

Its subcellular location is the cytoplasm. It carries out the reaction Mo-molybdopterin + GTP + H(+) = Mo-molybdopterin guanine dinucleotide + diphosphate. Its function is as follows. Transfers a GMP moiety from GTP to Mo-molybdopterin (Mo-MPT) cofactor (Moco or molybdenum cofactor) to form Mo-molybdopterin guanine dinucleotide (Mo-MGD) cofactor. In Cupriavidus taiwanensis (strain DSM 17343 / BCRC 17206 / CCUG 44338 / CIP 107171 / LMG 19424 / R1) (Ralstonia taiwanensis (strain LMG 19424)), this protein is Molybdenum cofactor guanylyltransferase.